The primary structure comprises 134 residues: Syncollin (134 aa).

Residues 1 to 21 form the signal peptide; the sequence is MSPLCLLLLALALVAVPGARG.

Monomer and homooligomer; most probably hexameric. Interacts with GP2. According to PubMed:10753942 interaction with syntaxins shown in PubMed:9244306 is physiologically questionable. In terms of processing, contains intrachain disulfide bonds. In terms of tissue distribution, specifically expressed in pancreas and also detected in secretory granules of parotid gland (at protein level). Expressed in pancreas, spleen, small intestine, lung and neutrophilic granulocytes (at protein level). Expressed by epithelial cells in duodenum and colon.

Its subcellular location is the zymogen granule membrane. It is found in the zymogen granule lumen. Functionally, functions in exocytosis in pancreatic acinar cells regulating the fusion of zymogen granules with each other. May have a pore-forming activity on membranes and regulate exocytosis in other exocrine tissues. The sequence is that of Syncollin (Sycn) from Rattus norvegicus (Rat).